The following is an 89-amino-acid chain: Small ribosomal subunit protein uS19 (89 aa).

It belongs to the universal ribosomal protein uS19 family.

In terms of biological role, protein S19 forms a complex with S13 that binds strongly to the 16S ribosomal RNA. The protein is Small ribosomal subunit protein uS19 of Ruthia magnifica subsp. Calyptogena magnifica.